The sequence spans 287 residues: 4-diphosphocytidyl-2-C-methyl-D-erythritol kinase (287 aa).

K10 is a catalytic residue. 92 to 102 is an ATP binding site; it reads PLAAGLAGGSA. D134 is a catalytic residue.

This sequence belongs to the GHMP kinase family. IspE subfamily.

The catalysed reaction is 4-CDP-2-C-methyl-D-erythritol + ATP = 4-CDP-2-C-methyl-D-erythritol 2-phosphate + ADP + H(+). Its pathway is isoprenoid biosynthesis; isopentenyl diphosphate biosynthesis via DXP pathway; isopentenyl diphosphate from 1-deoxy-D-xylulose 5-phosphate: step 3/6. In terms of biological role, catalyzes the phosphorylation of the position 2 hydroxy group of 4-diphosphocytidyl-2C-methyl-D-erythritol. The sequence is that of 4-diphosphocytidyl-2-C-methyl-D-erythritol kinase from Caldanaerobacter subterraneus subsp. tengcongensis (strain DSM 15242 / JCM 11007 / NBRC 100824 / MB4) (Thermoanaerobacter tengcongensis).